The chain runs to 172 residues: Large ribosomal subunit protein bL9 (172 aa).

It belongs to the bacterial ribosomal protein bL9 family.

Binds to the 23S rRNA. The sequence is that of Large ribosomal subunit protein bL9 from Chlamydia caviae (strain ATCC VR-813 / DSM 19441 / 03DC25 / GPIC) (Chlamydophila caviae).